We begin with the raw amino-acid sequence, 109 residues long: uncharacterized protein (109 aa).

Residues methionine 75–valine 95 traverse the membrane as a helical segment.

The protein localises to the membrane. This is an uncharacterized protein from Saccharomyces cerevisiae (strain ATCC 204508 / S288c) (Baker's yeast).